The chain runs to 580 residues: 2-succinyl-5-enolpyruvyl-6-hydroxy-3-cyclohexene-1-carboxylate synthase (580 aa).

The protein belongs to the TPP enzyme family. MenD subfamily. Homodimer. It depends on Mg(2+) as a cofactor. Requires Mn(2+) as cofactor. The cofactor is thiamine diphosphate.

The enzyme catalyses isochorismate + 2-oxoglutarate + H(+) = 5-enolpyruvoyl-6-hydroxy-2-succinyl-cyclohex-3-ene-1-carboxylate + CO2. The protein operates within quinol/quinone metabolism; 1,4-dihydroxy-2-naphthoate biosynthesis; 1,4-dihydroxy-2-naphthoate from chorismate: step 2/7. It functions in the pathway quinol/quinone metabolism; menaquinone biosynthesis. In terms of biological role, catalyzes the thiamine diphosphate-dependent decarboxylation of 2-oxoglutarate and the subsequent addition of the resulting succinic semialdehyde-thiamine pyrophosphate anion to isochorismate to yield 2-succinyl-5-enolpyruvyl-6-hydroxy-3-cyclohexene-1-carboxylate (SEPHCHC). This is 2-succinyl-5-enolpyruvyl-6-hydroxy-3-cyclohexene-1-carboxylate synthase from Listeria monocytogenes serotype 4b (strain F2365).